We begin with the raw amino-acid sequence, 495 residues long: Cysteine--tRNA ligase (495 aa).

Cysteine 35 is a binding site for Zn(2+). The short motif at 37–47 is the 'HIGH' region element; the sequence is PTVYSNVHLGN. The Zn(2+) site is built by cysteine 230, histidine 255, and glutamate 259. Positions 287 to 291 match the 'KMSKS' region motif; the sequence is KMSKS. Lysine 290 serves as a coordination point for ATP.

Belongs to the class-I aminoacyl-tRNA synthetase family. Monomer. Requires Zn(2+) as cofactor.

The protein resides in the cytoplasm. The enzyme catalyses tRNA(Cys) + L-cysteine + ATP = L-cysteinyl-tRNA(Cys) + AMP + diphosphate. The polypeptide is Cysteine--tRNA ligase (Flavobacterium psychrophilum (strain ATCC 49511 / DSM 21280 / CIP 103535 / JIP02/86)).